A 334-amino-acid chain; its full sequence is HTH-type transcriptional repressor PurR (334 aa).

In terms of domain architecture, HTH lacI-type spans 2-56; the sequence is ATIKDVARLAGVSTTTVSHVINKTRFVAEATQEKVMKAVDELNYAPSAVARSLKC. Residues 4–23 constitute a DNA-binding region (H-T-H motif); that stretch reads IKDVARLAGVSTTTVSHVIN. A DNA-binding region spans residues 48 to 56; that stretch reads SAVARSLKC. Hypoxanthine contacts are provided by Phe73, Lys189, Phe220, and Asp274.

Homodimer.

It functions in the pathway purine metabolism; purine nucleotide biosynthesis [regulation]. Is the main repressor of the genes involved in the de novo synthesis of purine nucleotides, regulating purB, purC, purEK, purF, purHD, purL, purMN and guaBA expression. PurR is allosterically activated to bind its cognate DNA by binding the purine corepressors, hypoxanthine or guanine, thereby effecting transcription repression. The chain is HTH-type transcriptional repressor PurR from Vibrio parahaemolyticus serotype O3:K6 (strain RIMD 2210633).